The primary structure comprises 365 residues: 3-dehydroquinate synthase (365 aa).

NAD(+) contacts are provided by residues 75–80, 109–113, 133–134, K146, and K155; these read DAESGK, GAATD, and TT. The Zn(2+) site is built by E188, H253, and H269.

Belongs to the sugar phosphate cyclases superfamily. Dehydroquinate synthase family. NAD(+) serves as cofactor. Requires Co(2+) as cofactor. The cofactor is Zn(2+).

The protein resides in the cytoplasm. It catalyses the reaction 7-phospho-2-dehydro-3-deoxy-D-arabino-heptonate = 3-dehydroquinate + phosphate. Its pathway is metabolic intermediate biosynthesis; chorismate biosynthesis; chorismate from D-erythrose 4-phosphate and phosphoenolpyruvate: step 2/7. Catalyzes the conversion of 3-deoxy-D-arabino-heptulosonate 7-phosphate (DAHP) to dehydroquinate (DHQ). This Corynebacterium efficiens (strain DSM 44549 / YS-314 / AJ 12310 / JCM 11189 / NBRC 100395) protein is 3-dehydroquinate synthase.